The chain runs to 227 residues: Cytochrome c oxidase subunit 2 (227 aa).

Over 1-14 (MAYPFQLGLQDATS) the chain is Mitochondrial intermembrane. Residues 15-45 (PIMEELTNFHDHTLMIVFLISSLVLYIISLM) traverse the membrane as a helical segment. Topologically, residues 46–59 (LTTKLTHTSTMDAQ) are mitochondrial matrix. A helical transmembrane segment spans residues 60 to 87 (EVETIWTILPAVILILIALPSLRILYMM). Topologically, residues 88–227 (DEINNPVLTV…YFENWSASMI (140 aa)) are mitochondrial intermembrane. Cu cation is bound by residues histidine 161, cysteine 196, glutamate 198, cysteine 200, histidine 204, and methionine 207. Glutamate 198 is a binding site for Mg(2+). Tyrosine 218 is subject to Phosphotyrosine.

The protein belongs to the cytochrome c oxidase subunit 2 family. In terms of assembly, component of the cytochrome c oxidase (complex IV, CIV), a multisubunit enzyme composed of 14 subunits. The complex is composed of a catalytic core of 3 subunits MT-CO1, MT-CO2 and MT-CO3, encoded in the mitochondrial DNA, and 11 supernumerary subunits COX4I, COX5A, COX5B, COX6A, COX6B, COX6C, COX7A, COX7B, COX7C, COX8 and NDUFA4, which are encoded in the nuclear genome. The complex exists as a monomer or a dimer and forms supercomplexes (SCs) in the inner mitochondrial membrane with NADH-ubiquinone oxidoreductase (complex I, CI) and ubiquinol-cytochrome c oxidoreductase (cytochrome b-c1 complex, complex III, CIII), resulting in different assemblies (supercomplex SCI(1)III(2)IV(1) and megacomplex MCI(2)III(2)IV(2)). Found in a complex with TMEM177, COA6, COX18, COX20, SCO1 and SCO2. Interacts with TMEM177 in a COX20-dependent manner. Interacts with COX20. Interacts with COX16. Cu cation serves as cofactor.

The protein resides in the mitochondrion inner membrane. It catalyses the reaction 4 Fe(II)-[cytochrome c] + O2 + 8 H(+)(in) = 4 Fe(III)-[cytochrome c] + 2 H2O + 4 H(+)(out). Component of the cytochrome c oxidase, the last enzyme in the mitochondrial electron transport chain which drives oxidative phosphorylation. The respiratory chain contains 3 multisubunit complexes succinate dehydrogenase (complex II, CII), ubiquinol-cytochrome c oxidoreductase (cytochrome b-c1 complex, complex III, CIII) and cytochrome c oxidase (complex IV, CIV), that cooperate to transfer electrons derived from NADH and succinate to molecular oxygen, creating an electrochemical gradient over the inner membrane that drives transmembrane transport and the ATP synthase. Cytochrome c oxidase is the component of the respiratory chain that catalyzes the reduction of oxygen to water. Electrons originating from reduced cytochrome c in the intermembrane space (IMS) are transferred via the dinuclear copper A center (CU(A)) of subunit 2 and heme A of subunit 1 to the active site in subunit 1, a binuclear center (BNC) formed by heme A3 and copper B (CU(B)). The BNC reduces molecular oxygen to 2 water molecules using 4 electrons from cytochrome c in the IMS and 4 protons from the mitochondrial matrix. The sequence is that of Cytochrome c oxidase subunit 2 from Rattus norvegicus (Rat).